Here is a 998-residue protein sequence, read N- to C-terminus: Regulator of telomere elongation helicase 1 homolog (998 aa).

Residues 7–324 enclose the Helicase ATP-binding domain; the sequence is AGIPVHFPFE…KEMLLELEKA (318 aa). 42–49 is a binding site for ATP; that stretch reads SPTGTGKT. Positions 148, 166, 175, and 211 each coordinate [4Fe-4S] cluster. Residues 254–257 carry the DEAH box motif; the sequence is DEAH. Residues 426 to 454 form a disordered region; the sequence is QNAGKPAPKQQQQGGWLGKGNNTSNSSSS. T887 is subject to Phosphothreonine.

This sequence belongs to the helicase family. RAD3/XPD subfamily.

The protein localises to the nucleus. It carries out the reaction ATP + H2O = ADP + phosphate + H(+). Its function is as follows. A probable ATP-dependent DNA helicase implicated in DNA repair and the maintenance of genomic stability. Acts as an anti-recombinase to counteract toxic recombination and limit crossover during meiosis. Regulates meiotic recombination and crossover homeostasis by physically dissociating strand invasion events and thereby promotes noncrossover repair by meiotic synthesis dependent strand annealing (SDSA) as well as disassembly of D loop recombination intermediates. The chain is Regulator of telomere elongation helicase 1 homolog from Drosophila willistoni (Fruit fly).